Here is a 612-residue protein sequence, read N- to C-terminus: Alpha-glycerophosphate oxidase (612 aa).

Residue 21–49 (DLLIIGGGITGAGVALQAAASGLDTGLIE) coordinates FAD. The span at 399 to 408 (ETSTSEKELD) shows a compositional bias: basic and acidic residues. The disordered stretch occupies residues 399–418 (ETSTSEKELDPSAVSRGSSF).

This sequence belongs to the FAD-dependent glycerol-3-phosphate dehydrogenase family. It depends on FAD as a cofactor.

It localises to the cytoplasm. It carries out the reaction sn-glycerol 3-phosphate + O2 = dihydroxyacetone phosphate + H2O2. This Streptococcus pyogenes serotype M6 (strain ATCC BAA-946 / MGAS10394) protein is Alpha-glycerophosphate oxidase (glpO).